The primary structure comprises 730 residues: Aspyridones cluster regulator apdR (730 aa).

A DNA-binding region (zn(2)-C6 fungal-type) is located at residues 20–46 (CTECRRRKIRCDQATPCRHCEKAALRC).

Its subcellular location is the nucleus. In terms of biological role, transcription factor involved in regulation of gene cluster that mediates the biosynthesis of aspyridones. The sequence is that of Aspyridones cluster regulator apdR from Emericella nidulans (strain FGSC A4 / ATCC 38163 / CBS 112.46 / NRRL 194 / M139) (Aspergillus nidulans).